The primary structure comprises 174 residues: Shikimate kinase 2 (174 aa).

An ATP-binding site is contributed by 12 to 17; it reads GCGKTT. 2 residues coordinate Mg(2+): Thr-16 and Asp-32. Substrate is bound by residues Asp-34, Arg-58, and Gly-79. Residues 112 to 126 form an LID domain region; it reads EAFPEEGQRPTLTGK. Residue Arg-120 coordinates ATP. Residue Arg-139 participates in substrate binding. Gln-155 serves as a coordination point for ATP.

This sequence belongs to the shikimate kinase family. AroL subfamily. In terms of assembly, monomer. It depends on Mg(2+) as a cofactor.

Its subcellular location is the cytoplasm. The enzyme catalyses shikimate + ATP = 3-phosphoshikimate + ADP + H(+). The protein operates within metabolic intermediate biosynthesis; chorismate biosynthesis; chorismate from D-erythrose 4-phosphate and phosphoenolpyruvate: step 5/7. Functionally, catalyzes the specific phosphorylation of the 3-hydroxyl group of shikimic acid using ATP as a cosubstrate. This is Shikimate kinase 2 from Enterobacter sp. (strain 638).